The primary structure comprises 559 residues: 2,3-bisphosphoglycerate-independent phosphoglycerate mutase (559 aa).

2 residues coordinate Mn(2+): D28 and S81. Residue S81 is the Phosphoserine intermediate of the active site. Substrate contacts are provided by residues H140, R170–D171, R206, R213, R286–R289, and K361. Mn(2+) is bound by residues D430, H434, D471, H472, and H501.

It belongs to the BPG-independent phosphoglycerate mutase family. Monomer. It depends on Mn(2+) as a cofactor. Found ubiquitously in germinating seed.

Its subcellular location is the cytoplasm. It carries out the reaction (2R)-2-phosphoglycerate = (2R)-3-phosphoglycerate. It functions in the pathway carbohydrate degradation; glycolysis; pyruvate from D-glyceraldehyde 3-phosphate: step 3/5. Functionally, catalyzes the interconversion of 2-phosphoglycerate and 3-phosphoglycerate. The protein is 2,3-bisphosphoglycerate-independent phosphoglycerate mutase of Nicotiana tabacum (Common tobacco).